The following is a 316-amino-acid chain: 4-hydroxy-3-methylbut-2-enyl diphosphate reductase (316 aa).

C12 lines the [4Fe-4S] cluster pocket. The (2E)-4-hydroxy-3-methylbut-2-enyl diphosphate site is built by H41 and H74. The dimethylallyl diphosphate site is built by H41 and H74. Isopentenyl diphosphate is bound by residues H41 and H74. C96 lines the [4Fe-4S] cluster pocket. Position 124 (H124) interacts with (2E)-4-hydroxy-3-methylbut-2-enyl diphosphate. A dimethylallyl diphosphate-binding site is contributed by H124. H124 contacts isopentenyl diphosphate. E126 (proton donor) is an active-site residue. T169 contributes to the (2E)-4-hydroxy-3-methylbut-2-enyl diphosphate binding site. C199 is a binding site for [4Fe-4S] cluster. Residues S227, S228, N229, and S271 each coordinate (2E)-4-hydroxy-3-methylbut-2-enyl diphosphate. S227, S228, N229, and S271 together coordinate dimethylallyl diphosphate. Residues S227, S228, N229, and S271 each coordinate isopentenyl diphosphate.

The protein belongs to the IspH family. It depends on [4Fe-4S] cluster as a cofactor.

The catalysed reaction is isopentenyl diphosphate + 2 oxidized [2Fe-2S]-[ferredoxin] + H2O = (2E)-4-hydroxy-3-methylbut-2-enyl diphosphate + 2 reduced [2Fe-2S]-[ferredoxin] + 2 H(+). The enzyme catalyses dimethylallyl diphosphate + 2 oxidized [2Fe-2S]-[ferredoxin] + H2O = (2E)-4-hydroxy-3-methylbut-2-enyl diphosphate + 2 reduced [2Fe-2S]-[ferredoxin] + 2 H(+). The protein operates within isoprenoid biosynthesis; dimethylallyl diphosphate biosynthesis; dimethylallyl diphosphate from (2E)-4-hydroxy-3-methylbutenyl diphosphate: step 1/1. It functions in the pathway isoprenoid biosynthesis; isopentenyl diphosphate biosynthesis via DXP pathway; isopentenyl diphosphate from 1-deoxy-D-xylulose 5-phosphate: step 6/6. Functionally, catalyzes the conversion of 1-hydroxy-2-methyl-2-(E)-butenyl 4-diphosphate (HMBPP) into a mixture of isopentenyl diphosphate (IPP) and dimethylallyl diphosphate (DMAPP). Acts in the terminal step of the DOXP/MEP pathway for isoprenoid precursor biosynthesis. In Xanthomonas campestris pv. campestris (strain 8004), this protein is 4-hydroxy-3-methylbut-2-enyl diphosphate reductase.